The chain runs to 336 residues: Holliday junction branch migration complex subunit RuvB (336 aa).

A large ATPase domain (RuvB-L) region spans residues 4–184; the sequence is SDRLISSQSI…FGIVQRLEYY (181 aa). Residues Ile-23, Arg-24, Gly-65, Lys-68, Thr-69, Thr-70, 131–133, Arg-174, Tyr-184, and Arg-221 contribute to the ATP site; that span reads EDY. Position 69 (Thr-69) interacts with Mg(2+). The small ATPAse domain (RuvB-S) stretch occupies residues 185-255; it reads SVDSLTQIVA…MAQQALEMLE (71 aa). The head domain (RuvB-H) stretch occupies residues 258–336; it reads QHGFDLMDRK…HFGFSAIEQE (79 aa). DNA-binding residues include Arg-313 and Arg-318.

The protein belongs to the RuvB family. In terms of assembly, homohexamer. Forms an RuvA(8)-RuvB(12)-Holliday junction (HJ) complex. HJ DNA is sandwiched between 2 RuvA tetramers; dsDNA enters through RuvA and exits via RuvB. An RuvB hexamer assembles on each DNA strand where it exits the tetramer. Each RuvB hexamer is contacted by two RuvA subunits (via domain III) on 2 adjacent RuvB subunits; this complex drives branch migration. In the full resolvosome a probable DNA-RuvA(4)-RuvB(12)-RuvC(2) complex forms which resolves the HJ.

The protein resides in the cytoplasm. The enzyme catalyses ATP + H2O = ADP + phosphate + H(+). In terms of biological role, the RuvA-RuvB-RuvC complex processes Holliday junction (HJ) DNA during genetic recombination and DNA repair, while the RuvA-RuvB complex plays an important role in the rescue of blocked DNA replication forks via replication fork reversal (RFR). RuvA specifically binds to HJ cruciform DNA, conferring on it an open structure. The RuvB hexamer acts as an ATP-dependent pump, pulling dsDNA into and through the RuvAB complex. RuvB forms 2 homohexamers on either side of HJ DNA bound by 1 or 2 RuvA tetramers; 4 subunits per hexamer contact DNA at a time. Coordinated motions by a converter formed by DNA-disengaged RuvB subunits stimulates ATP hydrolysis and nucleotide exchange. Immobilization of the converter enables RuvB to convert the ATP-contained energy into a lever motion, pulling 2 nucleotides of DNA out of the RuvA tetramer per ATP hydrolyzed, thus driving DNA branch migration. The RuvB motors rotate together with the DNA substrate, which together with the progressing nucleotide cycle form the mechanistic basis for DNA recombination by continuous HJ branch migration. Branch migration allows RuvC to scan DNA until it finds its consensus sequence, where it cleaves and resolves cruciform DNA. In Legionella pneumophila subsp. pneumophila (strain Philadelphia 1 / ATCC 33152 / DSM 7513), this protein is Holliday junction branch migration complex subunit RuvB.